The chain runs to 149 residues: Large ribosomal subunit protein bL9 (149 aa).

This sequence belongs to the bacterial ribosomal protein bL9 family.

Its function is as follows. Binds to the 23S rRNA. The protein is Large ribosomal subunit protein bL9 of Stenotrophomonas maltophilia (strain K279a).